Reading from the N-terminus, the 1366-residue chain is Collagen alpha-2(I) chain (1366 aa).

Residues 1 to 22 (MLSFVDTRTLLLLAVTLCLATC) form the signal peptide. Pyrrolidone carboxylic acid is present on Q23. Positions 23 to 79 (QSLQEETVRKGPAGDRGPRGERGPPGPPGRDGEDGPTGPPGPPGPPGPPGLGGNFAA) are cleaved as a propeptide — N-terminal propeptide. Residues 28–44 (ETVRKGPAGDRGPRGER) show a composition bias toward basic and acidic residues. The segment at 28-1130 (ETVRKGPAGD…QPRSAPSLRP (1103 aa)) is disordered. P47, P50, P62, P65, P68, and P71 each carry 4-hydroxyproline. Pro residues predominate over residues 59–71 (TGPPGPPGPPGPP). Q80 is modified (pyrrolidone carboxylic acid). K84 is modified (allysine). Positions 84 to 94 (KGVGLGPGPMG) are enriched in gly residues. Positions 95 to 140 (LMGPRGPPGAAGAPGPQGFQGPAGEPGEPGQTGPAGARGPAGPPGK) are enriched in low complexity. 4-hydroxyproline is present on residues P102 and P108. A compositionally biased stretch (basic and acidic residues) spans 141–155 (AGEDGHPGKPGRPGE). K177 carries the 5-hydroxylysine; alternate modification. K177 carries an O-linked (Gal...) hydroxylysine; alternate glycan. 6 stretches are compositionally biased toward low complexity: residues 225–254 (VGAP…SAGP), 269–293 (AVGN…LSGP), 300–321 (PGAN…AGAP), 330–345 (PGPV…RGLV), 398–410 (LRGS…LPGA), and 419–434 (PPGS…VRGP). 4-hydroxyproline occurs at positions 420, 441, and 444. 2 stretches are compositionally biased toward low complexity: residues 470–489 (LPGI…RGEP) and 513–531 (AGLA…NGAQ). Over residues 538–547 (GVQGGKGEQG) the composition is skewed to gly residues. 4 stretches are compositionally biased toward low complexity: residues 594 to 611 (PGES…SRGP), 623 to 648 (EPGV…RGAA), 663 to 710 (RGEI…PRGS), and 717 to 737 (VGPA…QPGA). Over residues 738–747 (KGERGAKGPK) the composition is skewed to basic and acidic residues. Low complexity predominate over residues 752–765 (VVGPTGPVGAAGPA). Residues 775-784 (GSRGDGGPPG) are compositionally biased toward gly residues. Low complexity-rich tracts occupy residues 786–795 (TGFPGAAGRT), 849–876 (SGEA…LGLP), 884–932 (LPGV…NPGN), 956–974 (PVGA…PAGK), and 983–1001 (PSGP…PSGP). A compositionally biased stretch (basic and acidic residues) spans 1005–1016 (RGDKGEPGEKGP). The span at 1089-1101 (AGPPGPPGPPGPP) shows a compositional bias: pro residues. Residues 1120–1366 (DQPRSAPSLR…FVDIGPVCFK (247 aa)) constitute a propeptide, C-terminal propeptide. Residues 1133–1366 (YEVDATLKSL…FVDIGPVCFK (234 aa)) form the Fibrillar collagen NC1 domain. 3 disulfides stabilise this stretch: C1163–C1195, C1203–C1364, and C1272–C1317. Residues D1181, N1183, Q1184, C1186, and D1189 each coordinate Ca(2+). N-linked (GlcNAc...) asparagine glycosylation is present at N1267.

It belongs to the fibrillar collagen family. As to quaternary structure, trimers of one alpha 2(I) and two alpha 1(I) chains. Interacts (via C-terminus) with TMEM131 (via PapD-L domain); the interaction is direct and is involved in assembly and TRAPPIII ER-to-Golgi transport complex-dependent secretion of collagen. Post-translationally, prolines at the third position of the tripeptide repeating unit (G-X-Y) are hydroxylated in some or all of the chains. Forms the fibrils of tendon, ligaments and bones. In bones the fibrils are mineralized with calcium hydroxyapatite.

Its subcellular location is the secreted. It is found in the extracellular space. It localises to the extracellular matrix. Its function is as follows. Type I collagen is a member of group I collagen (fibrillar forming collagen). In Homo sapiens (Human), this protein is Collagen alpha-2(I) chain (COL1A2).